A 75-amino-acid polypeptide reads, in one-letter code: U6-lycotoxin-Ls1f (75 aa).

Residues 1–21 (MKLLLFTALVLVVISLVEVEA) form the signal peptide. A propeptide spanning residues 22 to 25 (ENER) is cleaved from the precursor.

It belongs to the neurotoxin 19 (CSTX) family. 06 (U6-Lctx) subfamily. Contains 4 disulfide bonds. In terms of tissue distribution, expressed by the venom gland.

The protein resides in the secreted. The polypeptide is U6-lycotoxin-Ls1f (Lycosa singoriensis (Wolf spider)).